The primary structure comprises 160 residues: Cytochrome b6-f complex subunit 4 (160 aa).

Helical transmembrane passes span 36 to 56 (ILYMFPICILGALGLIAGLAI), 95 to 115 (LLGIAGMAAIPLGLMLVPFIE), and 127 to 147 (PIAMTVFLFGTAAALWLGAGA).

The protein belongs to the cytochrome b family. PetD subfamily. The 4 large subunits of the cytochrome b6-f complex are cytochrome b6, subunit IV (17 kDa polypeptide, PetD), cytochrome f and the Rieske protein, while the 4 small subunits are PetG, PetL, PetM and PetN. The complex functions as a dimer.

The protein resides in the cellular thylakoid membrane. Its function is as follows. Component of the cytochrome b6-f complex, which mediates electron transfer between photosystem II (PSII) and photosystem I (PSI), cyclic electron flow around PSI, and state transitions. This chain is Cytochrome b6-f complex subunit 4, found in Synechocystis sp. (strain ATCC 27184 / PCC 6803 / Kazusa).